The chain runs to 242 residues: tRNA (guanine-N(1)-)-methyltransferase (242 aa).

Residues glycine 112 and 131–136 contribute to the S-adenosyl-L-methionine site; that span reads LGDFIL.

It belongs to the RNA methyltransferase TrmD family. As to quaternary structure, homodimer.

It localises to the cytoplasm. It carries out the reaction guanosine(37) in tRNA + S-adenosyl-L-methionine = N(1)-methylguanosine(37) in tRNA + S-adenosyl-L-homocysteine + H(+). Specifically methylates guanosine-37 in various tRNAs. This is tRNA (guanine-N(1)-)-methyltransferase from Crocosphaera subtropica (strain ATCC 51142 / BH68) (Cyanothece sp. (strain ATCC 51142)).